We begin with the raw amino-acid sequence, 143 residues long: Transcriptional regulator MraZ (143 aa).

SpoVT-AbrB domains are found at residues 5-47 (THSP…TTRE) and 76-119 (ANAE…DAGT).

It belongs to the MraZ family. In terms of assembly, forms oligomers.

It is found in the cytoplasm. It localises to the nucleoid. The sequence is that of Transcriptional regulator MraZ from Clavibacter michiganensis subsp. michiganensis (strain NCPPB 382).